The primary structure comprises 227 residues: Small ribosomal subunit protein uS3 (227 aa).

The KH type-2 domain occupies 38-106; sequence LRKYLREKLA…EVHLNIVEIR (69 aa).

Belongs to the universal ribosomal protein uS3 family. In terms of assembly, part of the 30S ribosomal subunit. Forms a tight complex with proteins S10 and S14.

In terms of biological role, binds the lower part of the 30S subunit head. Binds mRNA in the 70S ribosome, positioning it for translation. The polypeptide is Small ribosomal subunit protein uS3 (Paramagnetospirillum magneticum (strain ATCC 700264 / AMB-1) (Magnetospirillum magneticum)).